The primary structure comprises 696 residues: D-(-)-3-hydroxybutyrate oligomer hydrolase (696 aa).

A signal peptide spans 1–26 (MTKLGWGRRVVWGAALAAVAMLGACN). Catalysis depends on S309, which acts as the Charge relay system.

The protein belongs to the D-(-)-3-hydroxybutyrate oligomer hydrolase family.

The protein resides in the secreted. It catalyses the reaction (3R)-hydroxybutanoate dimer + H2O = 2 (R)-3-hydroxybutanoate + H(+). It participates in lipid metabolism; butanoate metabolism. In terms of biological role, participates in the degradation of poly-3-hydroxybutyrate (PHB). It works downstream of poly(3-hydroxybutyrate) depolymerase, hydrolyzing D(-)-3-hydroxybutyrate oligomers of various length (3HB-oligomers) into 3HB-monomers. This Burkholderia cenocepacia (strain HI2424) protein is D-(-)-3-hydroxybutyrate oligomer hydrolase.